A 140-amino-acid polypeptide reads, in one-letter code: Nucleoside diphosphate kinase (140 aa).

ATP is bound by residues Lys-11, Phe-59, Arg-87, Thr-93, Arg-104, and Asn-114. The active-site Pros-phosphohistidine intermediate is His-117.

This sequence belongs to the NDK family. As to quaternary structure, homotetramer. Requires Mg(2+) as cofactor.

Its subcellular location is the cytoplasm. It carries out the reaction a 2'-deoxyribonucleoside 5'-diphosphate + ATP = a 2'-deoxyribonucleoside 5'-triphosphate + ADP. The enzyme catalyses a ribonucleoside 5'-diphosphate + ATP = a ribonucleoside 5'-triphosphate + ADP. Major role in the synthesis of nucleoside triphosphates other than ATP. The ATP gamma phosphate is transferred to the NDP beta phosphate via a ping-pong mechanism, using a phosphorylated active-site intermediate. The sequence is that of Nucleoside diphosphate kinase from Rhodopseudomonas palustris (strain BisA53).